We begin with the raw amino-acid sequence, 301 residues long: MKFLSFNYKDAESYGVKVKRKDAVWDLKKVFAEFGEGDFHPQTLLEGLQQNQTLDFQEQVRKAVVAAEDSGKADEFKIAFNDIEFLPPVTPPNNVIAFGRNYQDHASELNHEVQRLYVFTKAASSLTGDESTIPNHKDITDQLDYEGELGIVIGKSGEKIPKALALDYIYGYTIINDITDRKAQNEQDQAFLSKSLTGGCPMGPYIVTKDELPTPENVNIVTKVNNDIRQDGNTSQMINKIDDLIEEISKYVALHPGDIIATGTPAGVGAGLQPPQFLQPGDEVKVTIDNIGTLTTYIAKD.

Glutamate 146, glutamate 148, and aspartate 177 together coordinate a divalent metal cation.

Belongs to the FAH family.

This is an uncharacterized protein from Staphylococcus haemolyticus (strain JCSC1435).